Consider the following 597-residue polypeptide: Cytosolic Fe-S cluster assembly factor nar1 (597 aa).

Positions 20, 62, 65, 68, 216, and 271 each coordinate [4Fe-4S] cluster. Residues 428-449 (RASRLPGGNRRLPVGRGAASGS) form a disordered region. [4Fe-4S] cluster contacts are provided by C462 and C466. The disordered stretch occupies residues 479–505 (REASSSVQSSTSAEVPDSSSKPTPHEQ).

It belongs to the NARF family.

Functionally, component of the cytosolic Fe/S protein assembly machinery. Required for maturation of extramitochondrial Fe/S proteins. May play a role in the transfer of pre-assembled Fe/S clusters to target apoproteins. The protein is Cytosolic Fe-S cluster assembly factor nar1 (nar1) of Aspergillus niger (strain ATCC MYA-4892 / CBS 513.88 / FGSC A1513).